The following is a 215-amino-acid chain: MGRRPARCYRYCKNKPYPKSRFCRGVPDPKIRIFDLGRKKAKVDEFPLCAHMVSDEYEQLSSEALEAARICANKYMVKTCGKDGFHIRVRLHPFHVIRINKMLSCAGADRLQTGMRGAFGKPQGTVARVHIGQVIMSVRTKAQNKEHVIEALRRAKFKFPGRQKIHVSKKYGFTKFNTCDFDNMLAEKRLIPDGCGVKYIPSRGPLSRWKALHAN.

This sequence belongs to the universal ribosomal protein uL16 family. As to quaternary structure, component of the large ribosomal subunit.

It is found in the cytoplasm. Functionally, component of the large ribosomal subunit. Plays a role in the formation of actively translating ribosomes. Plays a role in the embryonic brain development. The sequence is that of Large ribosomal subunit protein uL16 from Danio rerio (Zebrafish).